The following is a 447-amino-acid chain: Argininosuccinate synthase (447 aa).

Residues 17-25 (AFSGGLDTS) and Ala43 each bind ATP. Tyr99 contributes to the L-citrulline binding site. Residues Gly129 and Thr131 each contribute to the ATP site. L-aspartate is bound by residues Thr131, Asn135, and Asp136. Asn135 contributes to the L-citrulline binding site. Asp136 lines the ATP pocket. Residues Arg139 and Ser192 each coordinate L-citrulline. Asp194 provides a ligand contact to ATP. Residues Thr201, Glu203, and Glu280 each coordinate L-citrulline.

Belongs to the argininosuccinate synthase family. Type 2 subfamily. As to quaternary structure, homotetramer.

It is found in the cytoplasm. The catalysed reaction is L-citrulline + L-aspartate + ATP = 2-(N(omega)-L-arginino)succinate + AMP + diphosphate + H(+). The protein operates within amino-acid biosynthesis; L-arginine biosynthesis; L-arginine from L-ornithine and carbamoyl phosphate: step 2/3. This is Argininosuccinate synthase from Shigella boydii serotype 18 (strain CDC 3083-94 / BS512).